A 372-amino-acid chain; its full sequence is MSVTLHLRGETKPLEHRAALTPTTVKHLIGKGFKIYVEESPQSIFKIDEYRRAGAIIVPFGSWISAPRDRIIIGLKEMPEEDKFPLVHEHIQFAHCYKDQAGWKDVLRRFINGNGTLYDLEFLEDDNGRRVAAFGFYAGFAGAALGLADWAFKQTHKDSEDLPAVSPYPNEKALIKDIGKAYKNALKTGAKKPKVLIIGALGRCGSGAIDFLKKVGLPEENIIKWDIQETSRGGPFPEIAASDIFINCIYLSKPIAPFINYELLNKPDRKLRTVVDVSADTTNPHNPIPIYNIATVFNKPTVKVNTSSGPKLSVISIDHLPSLLPREASEFFAHDLLPSLEQLPSRHVSPVWVRAEKLFNRHSARAIRESKL.

Positions 17 and 76 each coordinate L-saccharopine. Residue Lys-76 is the Proton acceptor of the active site. Residue His-95 is the Proton donor of the active site. Residue Gln-100 participates in L-saccharopine binding. Arg-129 serves as a coordination point for NAD(+). The L-saccharopine site is built by Arg-130 and Phe-134. NAD(+) contacts are provided by residues 202 to 203 (GR), Asp-226, Thr-230, Tyr-250, and Val-277. Cys-204 and Cys-248 are disulfide-bonded. L-saccharopine is bound at residue 278–280 (SAD). 317-320 (IDHL) contributes to the NAD(+) binding site. A Microbody targeting signal motif is present at residues 370 to 372 (SKL).

Belongs to the AlaDH/PNT family. As to quaternary structure, monomer.

It localises to the peroxisome. It catalyses the reaction L-saccharopine + NAD(+) + H2O = L-lysine + 2-oxoglutarate + NADH + H(+). Its pathway is amino-acid biosynthesis; L-lysine biosynthesis via AAA pathway; L-lysine from L-alpha-aminoadipate (fungal route): step 3/3. In terms of biological role, catalyzes the NAD(+)-dependent cleavage of saccharopine to L-lysine and 2-oxoglutarate, the final step in the alpha-aminoadipate (AAA) pathway for lysin biosynthesis. The protein is Saccharopine dehydrogenase [NAD(+), L-lysine-forming] (LYS1) of Candida glabrata (strain ATCC 2001 / BCRC 20586 / JCM 3761 / NBRC 0622 / NRRL Y-65 / CBS 138) (Yeast).